The primary structure comprises 186 residues: Peptidyl-tRNA hydrolase (186 aa).

Y15 lines the tRNA pocket. The Proton acceptor role is filled by H20. TRNA is bound by residues Y64, N66, and N112.

This sequence belongs to the PTH family. As to quaternary structure, monomer.

The protein localises to the cytoplasm. The enzyme catalyses an N-acyl-L-alpha-aminoacyl-tRNA + H2O = an N-acyl-L-amino acid + a tRNA + H(+). Functionally, hydrolyzes ribosome-free peptidyl-tRNAs (with 1 or more amino acids incorporated), which drop off the ribosome during protein synthesis, or as a result of ribosome stalling. Its function is as follows. Catalyzes the release of premature peptidyl moieties from peptidyl-tRNA molecules trapped in stalled 50S ribosomal subunits, and thus maintains levels of free tRNAs and 50S ribosomes. The protein is Peptidyl-tRNA hydrolase of Azobacteroides pseudotrichonymphae genomovar. CFP2.